The sequence spans 74 residues: Kappa-stichotoxin-Hmg1a (74 aa).

A signal peptide spans 1–22; it reads MKSQMIAAVLLIAFCLCVVVTA. Positions 23–39 are excised as a propeptide; that stretch reads RMELQDVEDMENGFQKR. The ShKT domain maps to 42–74; sequence CKDLIPVSECTDIRCRTSMKYRLNLCRKTCGSC. 3 cysteine pairs are disulfide-bonded: cysteine 42/cysteine 74, cysteine 51/cysteine 67, and cysteine 56/cysteine 71.

It belongs to the sea anemone type 1 potassium channel toxin family. Type 1a subfamily.

The protein localises to the secreted. Its subcellular location is the nematocyst. Functionally, potently blocks the voltage-gated potassium channel Kv1.1/KCNA1 (Ki=75 pM), KcsA (Ki~1 nM) and moderately blocks Kv1.2/KCNA2 (Ki=2.5 nM) and Kv1.3/KCNA3 (Ki=3.1 nM). Also facilitates acetylcholine release at the avian neuromuscular junction. Blockade and dissociation rate are sensitive to voltage. This Heteractis magnifica (Magnificent sea anemone) protein is Kappa-stichotoxin-Hmg1a.